Reading from the N-terminus, the 341-residue chain is Adenine deaminase (341 aa).

3 residues coordinate Zn(2+): histidine 17, histidine 19, and histidine 197. The active-site Proton donor is glutamate 200. Zn(2+) is bound at residue aspartate 278. Aspartate 279 is a binding site for substrate.

Belongs to the metallo-dependent hydrolases superfamily. Adenosine and AMP deaminases family. Adenine deaminase type 2 subfamily. The cofactor is Zn(2+).

The enzyme catalyses adenine + H2O + H(+) = hypoxanthine + NH4(+). In terms of biological role, catalyzes the hydrolytic deamination of adenine to hypoxanthine. Plays an important role in the purine salvage pathway and in nitrogen catabolism. The polypeptide is Adenine deaminase (Chlorobium luteolum (strain DSM 273 / BCRC 81028 / 2530) (Pelodictyon luteolum)).